The following is a 308-amino-acid chain: MRFSTALSLALAVSPAAVFAAGNLGFSLGVKRPDGQCKDQADFEKDFDTLKAHGTTVRTYAAADCGSASLILPAAKSKGFKVVLGIWPDVEESYKADVDALKKAVPGNEDVVAAITVGSETLYRGNFTGPELLKKIKEVQKVFPKITIGTADSWNKYADGTADALIEGGVKYLLVNAFAFWQGKAIEQAPKTLFDDLVGAAKRIADKAPQGSSPYVAIGETGWPTDGGTDYGAAKAGTKNAEKFYKEGVCAMLAWGVDAFYFEAFDEPWKPKSIGDNGNAADETHWGMYTADRKPKFNADCKVNKKKD.

Positions 1–20 (MRFSTALSLALAVSPAAVFA) are cleaved as a signal peptide. The active-site Proton donor is the Glu120. The N-linked (GlcNAc...) asparagine glycan is linked to Asn126. The active-site Nucleophile is Glu220.

It belongs to the glycosyl hydrolase 17 family.

It localises to the secreted. Its subcellular location is the cell wall. The protein resides in the cytoplasm. It carries out the reaction Successive hydrolysis of beta-D-glucose units from the non-reducing ends of (1-&gt;3)-beta-D-glucans, releasing alpha-glucose.. Its function is as follows. Cell wall glucan 1,3-beta-glucosidase involved in cell wall biosynthesis and virulence. Crucial for delivery of beta-1,3-glucan to the biofilm matrix and for accumulation of mature matrix biomass. The sequence is that of Glucan 1,3-beta-glucosidase ARB_02797 from Arthroderma benhamiae (strain ATCC MYA-4681 / CBS 112371) (Trichophyton mentagrophytes).